Reading from the N-terminus, the 344-residue chain is tRNA N6-adenosine threonylcarbamoyltransferase (344 aa).

The Fe cation site is built by His-110 and His-114. Residues 133-137, Asp-166, Gly-179, and Asn-278 contribute to the substrate site; that span reads VMSGA. Residue Asp-303 participates in Fe cation binding.

The protein belongs to the KAE1 / TsaD family. It depends on Fe(2+) as a cofactor.

It is found in the cytoplasm. The enzyme catalyses L-threonylcarbamoyladenylate + adenosine(37) in tRNA = N(6)-L-threonylcarbamoyladenosine(37) in tRNA + AMP + H(+). Functionally, required for the formation of a threonylcarbamoyl group on adenosine at position 37 (t(6)A37) in tRNAs that read codons beginning with adenine. Is involved in the transfer of the threonylcarbamoyl moiety of threonylcarbamoyl-AMP (TC-AMP) to the N6 group of A37, together with TsaE and TsaB. TsaD likely plays a direct catalytic role in this reaction. The chain is tRNA N6-adenosine threonylcarbamoyltransferase from Chlamydia felis (strain Fe/C-56) (Chlamydophila felis).